Here is a 649-residue protein sequence, read N- to C-terminus: Acetylcholinesterase (649 aa).

The first 38 residues, Met-1 to Gly-38, serve as a signal peptide directing secretion. Residues Cys-104 and Cys-131 are joined by a disulfide bond. N-linked (GlcNAc...) asparagine glycosylation is found at Asn-126 and Asn-174. Ser-276 acts as the Acyl-ester intermediate in catalysis. Cys-330 and Cys-345 form a disulfide bridge. An N-linked (GlcNAc...) asparagine glycan is attached at Asn-331. Active-site charge relay system residues include Glu-405 and His-518. Cys-480 and Cys-598 are oxidised to a cystine. N-linked (GlcNAc...) asparagine glycosylation occurs at Asn-531. Ser-619 carries the GPI-anchor amidated serine lipid modification. The propeptide at Gly-620–Phe-649 is removed in mature form.

It belongs to the type-B carboxylesterase/lipase family. Homodimer; disulfide-linked. The active unit is formed by non-covalent association of the 55 kDa and 16 kDa subunits. Proteolytic cleavage into the 16 kDa subunit and the 55 kDa subunits originates from the hydrophilic peptide, aa 148-180, and is associated with excretion out of the cell. Post-translationally, neither N-glycosylation nor dimerization is required for enzyme activity or substrate specificity, but protects the protein against proteolytic digestion.

It is found in the synapse. It localises to the cell membrane. The catalysed reaction is acetylcholine + H2O = choline + acetate + H(+). Functionally, rapidly hydrolyzes choline released into the synapse. It can hydrolyze butyrylthiocholine. This is Acetylcholinesterase (Ace) from Drosophila melanogaster (Fruit fly).